A 587-amino-acid polypeptide reads, in one-letter code: Thiol:disulfide interchange protein DsbD 2 (587 aa).

The N-terminal stretch at 1-18 is a signal peptide; sequence MRVLILLLMLLLPGLSQA. Over 19 to 172 the chain is Periplasmic; it reads QPGDDLFAPR…SLQAGNLAWS (154 aa). 2 cysteine pairs are disulfide-bonded: Cys124–Cys130 and Cys188–Cys308. A helical membrane pass occupies residues 173 to 193; the sequence is LLLFFGLGLLLAFAPCSLPML. The Cytoplasmic portion of the chain corresponds to 194–216; it reads PILAGLVVGSGAGPRRGLLLAGS. Residues 217-237 form a helical membrane-spanning segment; the sequence is YVLSMALVYAGLGVVAALLGG. Topologically, residues 238-246 are periplasmic; that stretch reads NLQAWLQQP. The chain crosses the membrane as a helical span at residues 247–267; sequence WLLGSFAALFVFLALPMFGFF. At 268–299 the chain is on the cytoplasmic side; it reads ELQLPAALRDRLDGLSRGRKGGSLAGAAALGA. Residues 300 to 320 traverse the membrane as a helical segment; the sequence is LSGLLVGPCMTAPLAGALLYI. Residues 321–330 are Periplasmic-facing; sequence AQTGNALHGG. A helical membrane pass occupies residues 331–351; it reads LVLFSLGLGIGMPLLLLVTVG. Residues 352-360 are Cytoplasmic-facing; sequence SRFLPKPGP. The chain crosses the membrane as a helical span at residues 361–381; sequence WMNLVKGVFGFLFLGTAWILL. Residues 382–383 lie on the Periplasmic side of the membrane; it reads RP. The helical transmembrane segment at 384 to 404 threads the bilayer; the sequence is LLGEALWIGLGGALLLVLAYA. Residues 405 to 416 are Cytoplasmic-facing; it reads ALHTARGLARHA. A helical membrane pass occupies residues 417–437; that stretch reads VLFGAAGCIFGLWGAAMLLGA. Residues 438–587 are Periplasmic-facing; sequence AAGADDPWRP…AHWQATRERG (150 aa). Residues 448-585 enclose the Thioredoxin domain; sequence LQVYAAANRG…FLAHWQATRE (138 aa). A disulfide bond links Cys500 and Cys503.

It belongs to the thioredoxin family. DsbD subfamily.

It localises to the cell inner membrane. The catalysed reaction is [protein]-dithiol + NAD(+) = [protein]-disulfide + NADH + H(+). It carries out the reaction [protein]-dithiol + NADP(+) = [protein]-disulfide + NADPH + H(+). Functionally, required to facilitate the formation of correct disulfide bonds in some periplasmic proteins and for the assembly of the periplasmic c-type cytochromes. Acts by transferring electrons from cytoplasmic thioredoxin to the periplasm. This transfer involves a cascade of disulfide bond formation and reduction steps. In Pseudomonas aeruginosa (strain ATCC 15692 / DSM 22644 / CIP 104116 / JCM 14847 / LMG 12228 / 1C / PRS 101 / PAO1), this protein is Thiol:disulfide interchange protein DsbD 2.